The sequence spans 231 residues: MMASLATSISGSFRILVKSSSTRNGFPVISDQNPSFVLFANKRRHISRTAIFHRSAISGSSQGEKISPLASGVSSGLYSAQTFDLTPQNVDLVLEDVRPFLISDGGNVDVVSVEDGVVSLKLQGACTSCPSSSTTMTMGIERVLKEKFGDALKDIRQVFDEEVKQITVEAVNAHLDILRPAIKNYGGSVEVLSVEGEDCVVKYVGPESIGMGIQAAIKEKFKDISNVTFTS.

Residues Met1–Leu69 constitute a chloroplast transit peptide.

The protein belongs to the NifU family. In terms of assembly, homodimer; disulfide-linked. In terms of tissue distribution, predominantly expressed in floral stalks and siliques. Expressed in leaves, cauline leaves, flower stalks and flowers (at protein level).

The protein resides in the plastid. The protein localises to the chloroplast stroma. Functionally, molecular scaffold for [Fe-S] cluster assembly of chloroplastic iron-sulfur proteins. This chain is NifU-like protein 1, chloroplastic (NIFU1), found in Arabidopsis thaliana (Mouse-ear cress).